The primary structure comprises 230 residues: UPF0173 metal-dependent hydrolase Rsph17029_0942 (230 aa).

The protein belongs to the UPF0173 family.

The chain is UPF0173 metal-dependent hydrolase Rsph17029_0942 from Cereibacter sphaeroides (strain ATCC 17029 / ATH 2.4.9) (Rhodobacter sphaeroides).